Here is a 246-residue protein sequence, read N- to C-terminus: Putative outer membrane protein YiaT (246 aa).

The first 21 residues, 1-21, serve as a signal peptide directing secretion; the sequence is MLINRNIVALFALPFMASATA.

The protein belongs to the MipA/OmpV family.

It is found in the cell outer membrane. This chain is Putative outer membrane protein YiaT (yiaT), found in Escherichia coli O157:H7.